We begin with the raw amino-acid sequence, 433 residues long: 3-phosphoshikimate 1-carboxyvinyltransferase (433 aa).

3-phosphoshikimate-binding residues include K22, S23, and R27. K22 lines the phosphoenolpyruvate pocket. Residues G96 and R130 each coordinate phosphoenolpyruvate. Residues S176, S177, Q178, S204, D319, N342, and K346 each contribute to the 3-phosphoshikimate site. Q178 contacts phosphoenolpyruvate. Catalysis depends on D319, which acts as the Proton acceptor. Phosphoenolpyruvate-binding residues include R350, R394, and K419.

It belongs to the EPSP synthase family. Monomer.

The protein localises to the cytoplasm. It catalyses the reaction 3-phosphoshikimate + phosphoenolpyruvate = 5-O-(1-carboxyvinyl)-3-phosphoshikimate + phosphate. Its pathway is metabolic intermediate biosynthesis; chorismate biosynthesis; chorismate from D-erythrose 4-phosphate and phosphoenolpyruvate: step 6/7. Its function is as follows. Catalyzes the transfer of the enolpyruvyl moiety of phosphoenolpyruvate (PEP) to the 5-hydroxyl of shikimate-3-phosphate (S3P) to produce enolpyruvyl shikimate-3-phosphate and inorganic phosphate. This Actinobacillus succinogenes (strain ATCC 55618 / DSM 22257 / CCUG 43843 / 130Z) protein is 3-phosphoshikimate 1-carboxyvinyltransferase.